The chain runs to 311 residues: Small ribosomal subunit biogenesis GTPase RsgA (311 aa).

Residues 88–246 (SKEKEQVIAA…VIDTPGIREF (159 aa)) form the CP-type G domain. GTP is bound by residues 137–140 (NKID) and 188–196 (GHSGVGKST). Residues C270, C275, H277, and C283 each coordinate Zn(2+).

The protein belongs to the TRAFAC class YlqF/YawG GTPase family. RsgA subfamily. As to quaternary structure, monomer. Associates with 30S ribosomal subunit, binds 16S rRNA. It depends on Zn(2+) as a cofactor.

The protein resides in the cytoplasm. In terms of biological role, one of several proteins that assist in the late maturation steps of the functional core of the 30S ribosomal subunit. Helps release RbfA from mature subunits. May play a role in the assembly of ribosomal proteins into the subunit. Circularly permuted GTPase that catalyzes slow GTP hydrolysis, GTPase activity is stimulated by the 30S ribosomal subunit. The polypeptide is Small ribosomal subunit biogenesis GTPase RsgA (Chlorobaculum parvum (strain DSM 263 / NCIMB 8327) (Chlorobium vibrioforme subsp. thiosulfatophilum)).